Here is a 321-residue protein sequence, read N- to C-terminus: Thylakoid-associated protein sll1697 (321 aa).

The protein resides in the cellular thylakoid membrane. The polypeptide is Thylakoid-associated protein sll1697 (Synechocystis sp. (strain ATCC 27184 / PCC 6803 / Kazusa)).